Reading from the N-terminus, the 794-residue chain is Zinc finger and BTB domain-containing protein 17 (794 aa).

The BTB domain occupies Met-1–Ile-104. The tract at residues Glu-116–Asp-285 is disordered. Positions Gly-132–Ala-142 are enriched in basic and acidic residues. The segment covering Ser-203 to Ser-216 has biased composition (low complexity). The segment covering Val-243–Asn-252 has biased composition (basic and acidic residues). The segment covering Glu-254–Ala-263 has biased composition (acidic residues). The tract at residues Glu-260–Cys-299 is interaction with MYC. 13 C2H2-type zinc fingers span residues His-297–His-319, Phe-325–His-347, Tyr-353–His-375, Tyr-381–His-403, Tyr-409–His-431, His-437–His-459, Leu-465–His-487, Tyr-493–His-515, Lys-519–His-543, Tyr-549–His-571, His-577–His-599, Tyr-605–His-628, and Tyr-708–His-730. Lys-388 participates in a covalent cross-link: Glycyl lysine isopeptide (Lys-Gly) (interchain with G-Cter in ubiquitin). Lys-472 is covalently cross-linked (Glycyl lysine isopeptide (Lys-Gly) (interchain with G-Cter in ubiquitin)). Residues His-628–Ala-709 form an interaction with MYC region. The interaction with HCFC1 stretch occupies residues His-628 to Glu-794. The tract at residues Pro-769 to Glu-794 is disordered. The span at Pro-784–Glu-794 shows a compositional bias: pro residues.

The protein belongs to the krueppel C2H2-type zinc-finger protein family. In terms of assembly, homooligomerizes (via the BTB/POZ domain), multimerization is required for DNA binding. Binds to the C-terminal helix-loop-helix motif of MYC which inhibits ZBTB17 transactivation and growth arrest activities and renders it insoluble in the nucleus. Also interacts with HCFC1, MAGEA4 and TMPRSS11A. Interacts (via the C-terminal zinc fingers) with GFI1; the interaction results in the recruitment of MYC to the CDKN1A/p21 and CDKN1B promoters and repression of transcription. Interacts with TRAF2, interfering with the binding of UBC13 to TRAF2, and inhibiting TRAF2 E3 ligase activity. Interacts with BCL6; the interaction inhibits ZBTB17 transactivation activity on target genes involved in cell cycle arrest. Interacts with ZBTB49; this interaction blocks ZBTB17-mediated repression of RB1. Post-translationally, undergoes 'Lys-48'-linked polyubiquitination at Lys-388 and Lys-472 and subsequent proteasomal degradation in a TRAF2-dependent manner and upon TNFA stimulation. As to expression, found in all the embryonic and adult tissues examined.

It is found in the nucleus. In terms of biological role, transcription factor that can function as an activator or repressor depending on its binding partners, and by targeting negative regulators of cell cycle progression. Has been shown to bind to the promoters of adenovirus major late protein and cyclin D1 and activate transcription. Required for early embryonic development during gastrulation. Plays a critical role in early lymphocyte development, where it is essential to prevent apoptosis in lymphoid precursors, allowing them to survive in response to IL7 and undergo proper lineage commitment. Represses RB1 transcription; this repression can be blocked by interaction with ZBTB49. This Mus musculus (Mouse) protein is Zinc finger and BTB domain-containing protein 17 (Zbtb17).